Consider the following 710-residue polypeptide: Polyribonucleotide nucleotidyltransferase (710 aa).

Asp501 and Asp507 together coordinate Mg(2+). Positions 568–628 constitute a KH domain; the sequence is PKVQMFQIKP…ETVKQAILFI (61 aa). Residues 638–710 enclose the S1 motif domain; sequence NSIYHAHISR…RIDFVLISKK (73 aa).

Belongs to the polyribonucleotide nucleotidyltransferase family. It depends on Mg(2+) as a cofactor.

The protein resides in the cytoplasm. The enzyme catalyses RNA(n+1) + phosphate = RNA(n) + a ribonucleoside 5'-diphosphate. Involved in mRNA degradation. Catalyzes the phosphorolysis of single-stranded polyribonucleotides processively in the 3'- to 5'-direction. This chain is Polyribonucleotide nucleotidyltransferase, found in Phytoplasma australiense.